The chain runs to 220 residues: Cytidylate kinase (220 aa).

9–17 (GPAASGKST) is a binding site for ATP.

It belongs to the cytidylate kinase family. Type 1 subfamily.

The protein localises to the cytoplasm. It carries out the reaction CMP + ATP = CDP + ADP. The enzyme catalyses dCMP + ATP = dCDP + ADP. The polypeptide is Cytidylate kinase (Thermotoga petrophila (strain ATCC BAA-488 / DSM 13995 / JCM 10881 / RKU-1)).